The primary structure comprises 116 residues: uncharacterized protein (116 aa).

The chain crosses the membrane as a helical span at residues 22-42 (LIFLVVNLKVPAVGLELFLLV).

The protein resides in the membrane. This is an uncharacterized protein from Saccharomyces cerevisiae (strain ATCC 204508 / S288c) (Baker's yeast).